The following is a 436-amino-acid chain: Magnesium transporter MRS2-B (436 aa).

2 stretches are compositionally biased toward low complexity: residues methionine 1–alanine 14 and valine 29–glycine 54. Positions methionine 1–leucine 60 are disordered. Positions leucine 176–aspartate 242 form a coiled coil. Helical transmembrane passes span leucine 372–glycine 392 and tryptophan 408–phenylalanine 428. A Required for magnesium transport activity motif is present at residues glycine 392 to asparagine 394.

The protein belongs to the CorA metal ion transporter (MIT) (TC 1.A.35.5) family.

It localises to the membrane. In terms of biological role, magnesium transporter that may mediate the influx of magnesium. The chain is Magnesium transporter MRS2-B (MRS2-B) from Oryza sativa subsp. indica (Rice).